Consider the following 155-residue polypeptide: 3-hydroxyacyl-[acyl-carrier-protein] dehydratase FabZ (155 aa).

Residue H58 is part of the active site.

This sequence belongs to the thioester dehydratase family. FabZ subfamily.

Its subcellular location is the cytoplasm. It carries out the reaction a (3R)-hydroxyacyl-[ACP] = a (2E)-enoyl-[ACP] + H2O. In terms of biological role, involved in unsaturated fatty acids biosynthesis. Catalyzes the dehydration of short chain beta-hydroxyacyl-ACPs and long chain saturated and unsaturated beta-hydroxyacyl-ACPs. The chain is 3-hydroxyacyl-[acyl-carrier-protein] dehydratase FabZ from Alkalilimnicola ehrlichii (strain ATCC BAA-1101 / DSM 17681 / MLHE-1).